The chain runs to 383 residues: 1-deoxy-D-xylulose 5-phosphate reductoisomerase (383 aa).

NADPH contacts are provided by T10, G11, S12, I13, and N123. K124 is a 1-deoxy-D-xylulose 5-phosphate binding site. E125 is a binding site for NADPH. D149 is a Mn(2+) binding site. The 1-deoxy-D-xylulose 5-phosphate site is built by S150, E151, S175, and H198. E151 provides a ligand contact to Mn(2+). Position 204 (G204) interacts with NADPH. 1-deoxy-D-xylulose 5-phosphate is bound by residues S211, N216, K217, and E220. E220 contacts Mn(2+).

The protein belongs to the DXR family. It depends on Mg(2+) as a cofactor. Mn(2+) is required as a cofactor.

The catalysed reaction is 2-C-methyl-D-erythritol 4-phosphate + NADP(+) = 1-deoxy-D-xylulose 5-phosphate + NADPH + H(+). The protein operates within isoprenoid biosynthesis; isopentenyl diphosphate biosynthesis via DXP pathway; isopentenyl diphosphate from 1-deoxy-D-xylulose 5-phosphate: step 1/6. Its function is as follows. Catalyzes the NADPH-dependent rearrangement and reduction of 1-deoxy-D-xylulose-5-phosphate (DXP) to 2-C-methyl-D-erythritol 4-phosphate (MEP). The chain is 1-deoxy-D-xylulose 5-phosphate reductoisomerase from Desulfosudis oleivorans (strain DSM 6200 / JCM 39069 / Hxd3) (Desulfococcus oleovorans).